Consider the following 342-residue polypeptide: Endo-1,4-beta-xylanase A (342 aa).

In terms of domain architecture, GH10 spans 11 to 342; it reads EMLNLSLAKT…KEALYRILRF (332 aa). Glu144 serves as the catalytic Proton donor. The active-site Nucleophile is Glu252.

It belongs to the glycosyl hydrolase 10 (cellulase F) family. Cytoplasmic xylanase subfamily.

It localises to the cytoplasm. The catalysed reaction is Endohydrolysis of (1-&gt;4)-beta-D-xylosidic linkages in xylans.. The protein operates within glycan degradation; xylan degradation. This Caldicellulosiruptor saccharolyticus (Caldocellum saccharolyticum) protein is Endo-1,4-beta-xylanase A (xynA).